Here is a 1560-residue protein sequence, read N- to C-terminus: uncharacterized protein (1560 aa).

Residues 1 to 46 (MEEIENAHYQNLENFNDETSEDVNDTSDDINKNNDDNNKYDDNNVN) are disordered. A compositionally biased stretch (acidic residues) spans 15 to 28 (FNDETSEDVNDTSD). The span at 29 to 46 (DINKNNDDNNKYDDNNVN) shows a compositional bias: basic and acidic residues. Coiled coils occupy residues 36-60 (DNNK…EEDN) and 317-359 (KKNN…NNNN). The segment at 568–594 (KKKKKKNDHHERDSDNNNNDSNNNNYY) is disordered. The span at 583–594 (NNNNDSNNNNYY) shows a compositional bias: low complexity. Residues 1188–1239 (DTTNNILNKQNESLDNLKKNMYLSKNNYDNQLSSYKNTKQNKTNINEKYNNN) are a coiled coil. 2 helical membrane passes run 1271–1291 (LYIS…FILL) and 1314–1334 (LDYF…ILIS).

The protein localises to the membrane. This is an uncharacterized protein from Plasmodium falciparum (isolate 3D7).